The sequence spans 63 residues: Large ribosomal subunit protein uL30 (63 aa).

This sequence belongs to the universal ribosomal protein uL30 family. In terms of assembly, part of the 50S ribosomal subunit.

The sequence is that of Large ribosomal subunit protein uL30 from Bradyrhizobium sp. (strain ORS 278).